Here is a 32-residue protein sequence, read N- to C-terminus: Fibrinolytic enzyme 2 (32 aa).

The Peptidase S8 domain maps to 1–32 (ISGTSMSCPHVAGRAYVLDTSLRVYLLDTGLR). Catalysis depends on S5, which acts as the Charge relay system.

Belongs to the peptidase S8 family.

Its activity is regulated as follows. Inhibited by PMSF. Not inhibited by benzamidine, aprotinin, SBTI, EDTA, EGTA, 2-mercaptoethanol, iodoacetic acid or pepstatin A. Serine protease. Has fibrinolytic and fibrinogenolytic but no plasminogenolytic activity. Cleaves after Arg and Lys residues. Cleaves fibrinogen alpha chain, beta chain and gamma chain in that order. The protein is Fibrinolytic enzyme 2 of Hediste japonica (Polychaete worm).